Here is a 273-residue protein sequence, read N- to C-terminus: Dermonecrotic toxin LhSicTox-alphaIA2ai (273 aa).

His5 is a catalytic residue. 2 residues coordinate Mg(2+): Glu25 and Asp27. His41 acts as the Nucleophile in catalysis. 2 disulfides stabilise this stretch: Cys45–Cys51 and Cys47–Cys190. Asp85 is a binding site for Mg(2+).

Belongs to the arthropod phospholipase D family. Class II subfamily. It depends on Mg(2+) as a cofactor. As to expression, expressed by the venom gland.

Its subcellular location is the secreted. It catalyses the reaction an N-(acyl)-sphingosylphosphocholine = an N-(acyl)-sphingosyl-1,3-cyclic phosphate + choline. The enzyme catalyses an N-(acyl)-sphingosylphosphoethanolamine = an N-(acyl)-sphingosyl-1,3-cyclic phosphate + ethanolamine. It carries out the reaction a 1-acyl-sn-glycero-3-phosphocholine = a 1-acyl-sn-glycero-2,3-cyclic phosphate + choline. The catalysed reaction is a 1-acyl-sn-glycero-3-phosphoethanolamine = a 1-acyl-sn-glycero-2,3-cyclic phosphate + ethanolamine. Dermonecrotic toxins cleave the phosphodiester linkage between the phosphate and headgroup of certain phospholipids (sphingolipid and lysolipid substrates), forming an alcohol (often choline) and a cyclic phosphate. This toxin acts on sphingomyelin (SM). It may also act on ceramide phosphoethanolamine (CPE), lysophosphatidylcholine (LPC) and lysophosphatidylethanolamine (LPE), but not on lysophosphatidylserine (LPS), and lysophosphatidylglycerol (LPG). It acts by transphosphatidylation, releasing exclusively cyclic phosphate products as second products. Induces dermonecrosis, hemolysis, increased vascular permeability, edema, inflammatory response, and platelet aggregation. In Loxosceles hirsuta (Recluse spider), this protein is Dermonecrotic toxin LhSicTox-alphaIA2ai.